A 582-amino-acid polypeptide reads, in one-letter code: MSLIIQSLPHWSRIPPRPPQLSQFQNSSRPKPLIQAGQVQHNALQIARRSANYHPSIWDPQYIESLKSPYGDECFGTRLEKLKFEAKRLLEATIEPLSWLELVDSIQRLGVAYHFEDEIKEGLDGVYGVGAHAGDDLYTAALQFRLLRQHGYGVTPDIFNKFLEKERTFKACTSLDAKGLLSLYEASHTMIHGEEVLEDAKEFSVKHLNYLMGNLQNNLREQVQHALEMPLHWRMPRLEAKHYIDVNGRSDERNMVLLELARLDFNFVQSKHQEELKEVSRWWRDLGLAKKLGFSRDRLVENYLWAVGIAPEPKFSNCRKGLTKLISILTVIDDIYDVYGSLDELELFTEAVKRWDIEALETLPEYMKICYLALFNFVHEVSYDTLKDYGWNILPFIREEWERLCMSYLVEAEWFGNGNKPALDEYLRNGWISVGGPVAMVHAYFLQGRPIRKDSINFLDHGSELIYWSSVATRLNDDLGTSKAEMKRGDVPKAVECYMIQTGESYEDAREHIQGLVRDCWKKMNEECLKCCLPKSYVETVLNMVRTAQCIYQHGDGIGTSTGVTQDRVISLICEPVPSQWP.

A chloroplast-targeting transit peptide spans 1-35 (MSLIIQSLPHWSRIPPRPPQLSQFQNSSRPKPLIQ). 5 residues coordinate (2E)-geranyl diphosphate: Arg-296, Asp-333, Asp-337, Arg-474, and Asp-477. Residues Asp-333 and Asp-337 each contribute to the Mg(2+) site. The DDXXD motif signature appears at 333 to 337 (DDIYD). Mg(2+) is bound by residues Asp-477, Thr-481, and Glu-485.

This sequence belongs to the terpene synthase family. Tpsb subfamily. In terms of assembly, monomer. Mg(2+) is required as a cofactor. Mn(2+) serves as cofactor. In terms of tissue distribution, expressed in male and female leaves. Barely detectable in fruits and shoots.

The protein localises to the plastid. It is found in the chloroplast. The enzyme catalyses (2E)-geranyl diphosphate = (E)-beta-ocimene + diphosphate. It functions in the pathway secondary metabolite biosynthesis; terpenoid biosynthesis. In terms of biological role, monoterpene synthase (TPS) involved in the biosynthesis of monoterpene natural products used by traditional Chinese medicine to treat headache, inflammation and intoxication. Catalyzes the conversion of (2E)-geranyl diphosphate (GPP) into (E)-beta-ocimene. This Litsea cubeba (Aromatic litsea) protein is Trans-ocimene synthase, chloroplastic.